A 755-amino-acid polypeptide reads, in one-letter code: Polyribonucleotide nucleotidyltransferase (755 aa).

2 residues coordinate Mg(2+): Asp-493 and Asp-499. Residues 560–619 (PRIMTIQIPVDKIGALIGPGGKTIRNICETTGAQIDIEDDGRVFITTPDGAAARQAISMI) form the KH domain. The S1 motif domain maps to 629–698 (GDIFLGKVVS…TTGKISLSRR (70 aa)). The tract at residues 699 to 755 (AVLTGETPEERKAAGAAPRPRPREEQRGGRDEPRSLRDELRGPRREGDRPRPRRRDD) is disordered. The span at 719–755 (RPREEQRGGRDEPRSLRDELRGPRREGDRPRPRRRDD) shows a compositional bias: basic and acidic residues.

The protein belongs to the polyribonucleotide nucleotidyltransferase family. Mg(2+) is required as a cofactor.

Its subcellular location is the cytoplasm. It carries out the reaction RNA(n+1) + phosphate = RNA(n) + a ribonucleoside 5'-diphosphate. Involved in mRNA degradation. Catalyzes the phosphorolysis of single-stranded polyribonucleotides processively in the 3'- to 5'-direction. This chain is Polyribonucleotide nucleotidyltransferase, found in Chloroflexus aurantiacus (strain ATCC 29366 / DSM 635 / J-10-fl).